The chain runs to 330 residues: Ketol-acid reductoisomerase (NADP(+)) (330 aa).

Residues 2–182 (ARMYYDADAN…GGTRAGILET (181 aa)) enclose the KARI N-terminal Rossmann domain. Residues 25–28 (YGSQ), serine 51, serine 53, and 83–86 (DEFQ) each bind NADP(+). Histidine 108 is an active-site residue. Residue glycine 134 coordinates NADP(+). The KARI C-terminal knotted domain occupies 183 to 328 (SFREETETDL…KDLRAMFSWL (146 aa)). Aspartate 191, glutamate 195, glutamate 227, and glutamate 231 together coordinate Mg(2+). Serine 252 lines the substrate pocket.

This sequence belongs to the ketol-acid reductoisomerase family. Mg(2+) is required as a cofactor.

The enzyme catalyses (2R)-2,3-dihydroxy-3-methylbutanoate + NADP(+) = (2S)-2-acetolactate + NADPH + H(+). The catalysed reaction is (2R,3R)-2,3-dihydroxy-3-methylpentanoate + NADP(+) = (S)-2-ethyl-2-hydroxy-3-oxobutanoate + NADPH + H(+). It functions in the pathway amino-acid biosynthesis; L-isoleucine biosynthesis; L-isoleucine from 2-oxobutanoate: step 2/4. The protein operates within amino-acid biosynthesis; L-valine biosynthesis; L-valine from pyruvate: step 2/4. Involved in the biosynthesis of branched-chain amino acids (BCAA). Catalyzes an alkyl-migration followed by a ketol-acid reduction of (S)-2-acetolactate (S2AL) to yield (R)-2,3-dihydroxy-isovalerate. In the isomerase reaction, S2AL is rearranged via a Mg-dependent methyl migration to produce 3-hydroxy-3-methyl-2-ketobutyrate (HMKB). In the reductase reaction, this 2-ketoacid undergoes a metal-dependent reduction by NADPH to yield (R)-2,3-dihydroxy-isovalerate. The chain is Ketol-acid reductoisomerase (NADP(+)) from Synechococcus sp. (strain ATCC 27144 / PCC 6301 / SAUG 1402/1) (Anacystis nidulans).